The primary structure comprises 1392 residues: ATP-dependent helicase/nuclease subunit A (1392 aa).

One can recognise a UvrD-like helicase ATP-binding domain in the interval asparagine 3–arginine 489. Alanine 24–threonine 31 lines the ATP pocket. 3 disordered regions span residues arginine 291–aspartate 319, arginine 556–alanine 594, and glycine 1051–lysine 1126. 2 stretches are compositionally biased toward basic and acidic residues: residues glutamate 305 to aspartate 319 and alanine 569 to glutamate 583. The UvrD-like helicase C-terminal domain occupies arginine 556–glycine 886. Positions serine 584–alanine 594 are enriched in acidic residues. The span at alanine 1088–leucine 1113 shows a compositional bias: basic and acidic residues.

The protein belongs to the helicase family. AddA subfamily. As to quaternary structure, heterodimer of AddA and AddB/RexB. Mg(2+) serves as cofactor.

The catalysed reaction is Couples ATP hydrolysis with the unwinding of duplex DNA by translocating in the 3'-5' direction.. It carries out the reaction ATP + H2O = ADP + phosphate + H(+). Its function is as follows. The heterodimer acts as both an ATP-dependent DNA helicase and an ATP-dependent, dual-direction single-stranded exonuclease. Recognizes the chi site generating a DNA molecule suitable for the initiation of homologous recombination. The AddA nuclease domain is required for chi fragment generation; this subunit has the helicase and 3' -&gt; 5' nuclease activities. The sequence is that of ATP-dependent helicase/nuclease subunit A from Desulfitobacterium hafniense (strain Y51).